Consider the following 308-residue polypeptide: Ribosomal protein L11 methyltransferase (308 aa).

Thr-148, Gly-169, Asp-191, and Asn-239 together coordinate S-adenosyl-L-methionine.

It belongs to the methyltransferase superfamily. PrmA family.

The protein localises to the cytoplasm. The catalysed reaction is L-lysyl-[protein] + 3 S-adenosyl-L-methionine = N(6),N(6),N(6)-trimethyl-L-lysyl-[protein] + 3 S-adenosyl-L-homocysteine + 3 H(+). Functionally, methylates ribosomal protein L11. The sequence is that of Ribosomal protein L11 methyltransferase from Psychrobacter cryohalolentis (strain ATCC BAA-1226 / DSM 17306 / VKM B-2378 / K5).